A 310-amino-acid polypeptide reads, in one-letter code: Olfactory receptor 2A25 (310 aa).

At 1 to 24 (MGGNQTSITEFLLLGFPIGPRIQM) the chain is on the extracellular side. N-linked (GlcNAc...) asparagine glycosylation is present at Asn4. A helical transmembrane segment spans residues 25–48 (LLFGLFSLFYIFILLGNGTILGLI). The Cytoplasmic portion of the chain corresponds to 49–56 (SLDSRLHT). Residues 57 to 78 (PMYFFLSHLAVVDIACACSTVP) traverse the membrane as a helical segment. Residues 79 to 99 (QMLVNLLHPAKPISFAGCMTQ) lie on the Extracellular side of the membrane. Residues Cys96 and Cys188 are joined by a disulfide bond. The chain crosses the membrane as a helical span at residues 100-119 (MFLFLSFAHTECLLLVVMSY). The Cytoplasmic segment spans residues 120–138 (DRYVAICHPLRYSTIMTWK). Residues 139 to 157 (VCITLALTSWILGVLLALV) traverse the membrane as a helical segment. Residues 158–195 (HLVLLLPLSFCGPQKLNHFFCEIMAVLKLACADTHINE) lie on the Extracellular side of the membrane. The chain crosses the membrane as a helical span at residues 196–218 (VMVLAGAVSVLVGAFFSTVISYV). Over 219-235 (HILCAILKIQSGEGCQK) the chain is Cytoplasmic. A helical membrane pass occupies residues 236 to 258 (AFSICSSHLCVVGLFYGTAIIMY). Residues 259–271 (VEPQYESPKEQKK) lie on the Extracellular side of the membrane. The helical transmembrane segment at 272–291 (YLLLFHSLFNPMLNPLIYSL) threads the bilayer. The Cytoplasmic segment spans residues 292–310 (RNKEVQGTLKRMLEKKRTS).

This sequence belongs to the G-protein coupled receptor 1 family.

The protein localises to the cell membrane. Functionally, odorant receptor. The chain is Olfactory receptor 2A25 (OR2A25) from Homo sapiens (Human).